A 58-amino-acid chain; its full sequence is Large ribosomal subunit protein uL30 (58 aa).

The protein belongs to the universal ribosomal protein uL30 family. Part of the 50S ribosomal subunit.

The sequence is that of Large ribosomal subunit protein uL30 from Blochmanniella floridana.